The primary structure comprises 285 residues: Diaminopimelate epimerase 2 (285 aa).

Substrate is bound by residues asparagine 11, asparagine 63, 73–74 (GN), asparagine 158, asparagine 191, 209–210 (ER), and 219–220 (GS).

Belongs to the diaminopimelate epimerase family. In terms of assembly, homodimer.

It localises to the cytoplasm. It catalyses the reaction (2S,6S)-2,6-diaminopimelate = meso-2,6-diaminopimelate. Its pathway is amino-acid biosynthesis; L-lysine biosynthesis via DAP pathway; DL-2,6-diaminopimelate from LL-2,6-diaminopimelate: step 1/1. Catalyzes the stereoinversion of LL-2,6-diaminopimelate (L,L-DAP) to meso-diaminopimelate (meso-DAP), a precursor of L-lysine and an essential component of the bacterial peptidoglycan. This Nostoc sp. (strain PCC 7120 / SAG 25.82 / UTEX 2576) protein is Diaminopimelate epimerase 2.